We begin with the raw amino-acid sequence, 374 residues long: Ribosomal RNA large subunit methyltransferase G (374 aa).

Belongs to the methyltransferase superfamily. RlmG family.

It is found in the cytoplasm. It carries out the reaction guanosine(1835) in 23S rRNA + S-adenosyl-L-methionine = N(2)-methylguanosine(1835) in 23S rRNA + S-adenosyl-L-homocysteine + H(+). Specifically methylates the guanine in position 1835 (m2G1835) of 23S rRNA. In Pseudomonas putida (strain W619), this protein is Ribosomal RNA large subunit methyltransferase G.